Here is a 221-residue protein sequence, read N- to C-terminus: 7-cyano-7-deazaguanine synthase (221 aa).

7–17 (LSGGMDSSTLA) provides a ligand contact to ATP. Cys187, Cys195, Cys198, and Cys201 together coordinate Zn(2+).

This sequence belongs to the QueC family. The cofactor is Zn(2+).

It catalyses the reaction 7-carboxy-7-deazaguanine + NH4(+) + ATP = 7-cyano-7-deazaguanine + ADP + phosphate + H2O + H(+). It functions in the pathway purine metabolism; 7-cyano-7-deazaguanine biosynthesis. In terms of biological role, catalyzes the ATP-dependent conversion of 7-carboxy-7-deazaguanine (CDG) to 7-cyano-7-deazaguanine (preQ(0)). The polypeptide is 7-cyano-7-deazaguanine synthase (Methanosphaerula palustris (strain ATCC BAA-1556 / DSM 19958 / E1-9c)).